The chain runs to 527 residues: Peptide chain release factor 3 (527 aa).

Positions 9-277 (AKRRTFAIIS…AVVDWAPRPL (269 aa)) constitute a tr-type G domain. Residues 18–25 (SHPDAGKT), 86–90 (DTPGH), and 140–143 (NKLD) contribute to the GTP site.

The protein belongs to the TRAFAC class translation factor GTPase superfamily. Classic translation factor GTPase family. PrfC subfamily.

The protein localises to the cytoplasm. In terms of biological role, increases the formation of ribosomal termination complexes and stimulates activities of RF-1 and RF-2. It binds guanine nucleotides and has strong preference for UGA stop codons. It may interact directly with the ribosome. The stimulation of RF-1 and RF-2 is significantly reduced by GTP and GDP, but not by GMP. The chain is Peptide chain release factor 3 from Pseudomonas fluorescens (strain Pf0-1).